The chain runs to 296 residues: Tyrosine recombinase XerC (296 aa).

The Core-binding (CB) domain maps to 1–84 (MEKIQQAYLY…TLRSFYEYWM (84 aa)). In terms of domain architecture, Tyr recombinase spans 105-286 (YLPHFFYEEE…TNEQLRKVYL (182 aa)). Residues arginine 145, lysine 169, histidine 238, arginine 241, and histidine 264 contribute to the active site. Tyrosine 273 (O-(3'-phospho-DNA)-tyrosine intermediate) is an active-site residue.

It belongs to the 'phage' integrase family. XerC subfamily. As to quaternary structure, forms a cyclic heterotetrameric complex composed of two molecules of XerC and two molecules of XerD.

Its subcellular location is the cytoplasm. Site-specific tyrosine recombinase, which acts by catalyzing the cutting and rejoining of the recombining DNA molecules. The XerC-XerD complex is essential to convert dimers of the bacterial chromosome into monomers to permit their segregation at cell division. It also contributes to the segregational stability of plasmids. The polypeptide is Tyrosine recombinase XerC (Staphylococcus saprophyticus subsp. saprophyticus (strain ATCC 15305 / DSM 20229 / NCIMB 8711 / NCTC 7292 / S-41)).